An 86-amino-acid chain; its full sequence is MKVSVVITLAVLGIMFVWASAAELEERGSDQRDSPAWLKSMERIFQSEERECTKFLGGCSEDSECCPHLGCKDVLYYCAWDGTFGK.

Positions 1-21 (MKVSVVITLAVLGIMFVWASA) are cleaved as a signal peptide. Positions 22–50 (AELEERGSDQRDSPAWLKSMERIFQSEER) are excised as a propeptide. Intrachain disulfides connect Cys52–Cys66, Cys59–Cys71, and Cys65–Cys78. The residue at position 84 (Phe84) is a Phenylalanine amide.

This sequence belongs to the neurotoxin 10 (Hwtx-1) family. 37 (Jztx-31) subfamily. As to expression, expressed by the venom gland.

The protein resides in the secreted. In terms of biological role, inhibits both peak current and fast inactivation of voltage-gated sodium channels (Nav) channels. Inhibits the inactivation of Nav on DRG neurons (EC(50)=1.77 uM) and peak current of cardiac myocytes (IC(50)=0.90 uM). The protein is Mu-theraphotoxin-Cg2a 1 of Chilobrachys guangxiensis (Chinese earth tiger tarantula).